The sequence spans 179 residues: Large ribosomal subunit protein uL5 (179 aa).

This sequence belongs to the universal ribosomal protein uL5 family. Part of the 50S ribosomal subunit; part of the 5S rRNA/L5/L18/L25 subcomplex. Contacts the 5S rRNA and the P site tRNA. Forms a bridge to the 30S subunit in the 70S ribosome.

This is one of the proteins that bind and probably mediate the attachment of the 5S RNA into the large ribosomal subunit, where it forms part of the central protuberance. In the 70S ribosome it contacts protein S13 of the 30S subunit (bridge B1b), connecting the 2 subunits; this bridge is implicated in subunit movement. Contacts the P site tRNA; the 5S rRNA and some of its associated proteins might help stabilize positioning of ribosome-bound tRNAs. This Synechococcus sp. (strain CC9605) protein is Large ribosomal subunit protein uL5.